Reading from the N-terminus, the 100-residue chain is Large ribosomal subunit protein bL21 (100 aa).

Belongs to the bacterial ribosomal protein bL21 family. In terms of assembly, part of the 50S ribosomal subunit. Contacts protein L20.

Functionally, this protein binds to 23S rRNA in the presence of protein L20. The polypeptide is Large ribosomal subunit protein bL21 (Rhodospirillum rubrum (strain ATCC 11170 / ATH 1.1.1 / DSM 467 / LMG 4362 / NCIMB 8255 / S1)).